A 67-amino-acid chain; its full sequence is Large ribosomal subunit protein uL29 (67 aa).

This sequence belongs to the universal ribosomal protein uL29 family.

This chain is Large ribosomal subunit protein uL29, found in Moorella thermoacetica (strain ATCC 39073 / JCM 9320).